A 177-amino-acid polypeptide reads, in one-letter code: Ferritin, heavy subunit (177 aa).

Positions 7 to 156 constitute a Ferritin-like diiron domain; the sequence is QNFHQDCEAA…DWVTNLRRMG (150 aa). Fe cation-binding residues include Glu24, Glu59, His62, Glu104, and Gln138.

This sequence belongs to the ferritin family. In terms of assembly, oligomer of 24 subunits. There are at least two types of subunits. The functional molecule forms a roughly spherical shell with a diameter of 12 nm and contains a central cavity into which the insoluble mineral iron core is deposited. In terms of tissue distribution, liver, gonads, head kidney, heart and spleen.

It carries out the reaction 4 Fe(2+) + O2 + 4 H(+) = 4 Fe(3+) + 2 H2O. Functionally, stores iron in a soluble, non-toxic, readily available form. Important for iron homeostasis. Has ferroxidase activity. Iron is taken up in the ferrous form and deposited as ferric hydroxides after oxidation. The sequence is that of Ferritin, heavy subunit from Salmo salar (Atlantic salmon).